The chain runs to 364 residues: Chorismate synthase (364 aa).

Arginine 47 is an NADP(+) binding site. FMN contacts are provided by residues 125 to 127 (RAS), glycine 288, 303 to 307 (KPTAT), and arginine 329.

Belongs to the chorismate synthase family. As to quaternary structure, homotetramer. It depends on FMNH2 as a cofactor.

The catalysed reaction is 5-O-(1-carboxyvinyl)-3-phosphoshikimate = chorismate + phosphate. The protein operates within metabolic intermediate biosynthesis; chorismate biosynthesis; chorismate from D-erythrose 4-phosphate and phosphoenolpyruvate: step 7/7. In terms of biological role, catalyzes the anti-1,4-elimination of the C-3 phosphate and the C-6 proR hydrogen from 5-enolpyruvylshikimate-3-phosphate (EPSP) to yield chorismate, which is the branch point compound that serves as the starting substrate for the three terminal pathways of aromatic amino acid biosynthesis. This reaction introduces a second double bond into the aromatic ring system. The protein is Chorismate synthase of Synechococcus sp. (strain CC9605).